A 239-amino-acid chain; its full sequence is Chaperone protein PapD (239 aa).

A signal peptide spans 1 to 21 (MIRKKILMAAIPLFVISGADA). An intrachain disulfide couples Cys228 to Cys233.

It belongs to the periplasmic pilus chaperone family. Interacts with substrates PapG and PapK.

It localises to the periplasm. Functionally, binds and caps interactive surfaces on P pilus subunits to prevent them from participating in non-productive interactions. Facilitates the import of P pilus subunits into the periplasm, probably also facilitates their folding. Chaperone-subunit complexes are then targeted to the PapC outer membrane usher where the chaperone must uncap from the subunits. Coexpression of this chaperone with individual, otherwise toxic, P pilus subunits (tested with PapA, PapE and PapG) suppresses their growth inhibitory phenotype. This Escherichia coli protein is Chaperone protein PapD (papD).